The sequence spans 332 residues: CRISPR-associated endonuclease Cas1 3 (332 aa).

3 residues coordinate Mn(2+): E159, H224, and E239.

Belongs to the CRISPR-associated endonuclease Cas1 family. As to quaternary structure, homodimer, forms a heterotetramer with a Cas2 homodimer. Requires Mg(2+) as cofactor. The cofactor is Mn(2+).

CRISPR (clustered regularly interspaced short palindromic repeat), is an adaptive immune system that provides protection against mobile genetic elements (viruses, transposable elements and conjugative plasmids). CRISPR clusters contain spacers, sequences complementary to antecedent mobile elements, and target invading nucleic acids. CRISPR clusters are transcribed and processed into CRISPR RNA (crRNA). Acts as a dsDNA endonuclease. Involved in the integration of spacer DNA into the CRISPR cassette. The polypeptide is CRISPR-associated endonuclease Cas1 3 (Thermus thermophilus (strain ATCC 27634 / DSM 579 / HB8)).